Here is a 628-residue protein sequence, read N- to C-terminus: Chaperone protein DnaK (628 aa).

A Phosphothreonine; by autocatalysis modification is found at threonine 197. Positions alanine 595–glycine 604 are enriched in basic and acidic residues. The interval alanine 595 to glutamate 628 is disordered.

Belongs to the heat shock protein 70 family.

Functionally, acts as a chaperone. The chain is Chaperone protein DnaK from Aliarcobacter butzleri (strain RM4018) (Arcobacter butzleri).